The following is a 193-amino-acid chain: Non-specific lipid transfer protein GPI-anchored 2 (193 aa).

An N-terminal signal peptide occupies residues 1-22 (MSNVVVIAVVLIVASLTGHVSA). 4 cysteine pairs are disulfide-bonded: C38-C83, C48-C67, C68-C110, and C81-C120. The N-linked (GlcNAc...) asparagine glycan is linked to N44. Positions 143 to 164 (APGSMSGAESPGGFGSGPSASR) are disordered. Residue G165 is the site of GPI-anchor amidated glycine attachment. Residues 166–193 (SDAPSSAPYSLFLNLIIFPLAFAFYIFC) constitute a propeptide, removed in mature form.

This sequence belongs to the plant LTP family. In terms of processing, O-glycosylated on hydroxyprolines; noncontiguous hydroxylproline residues are glycosylated with arabinogalactan. As to expression, up-regulated in the epidermis of top stems. Expressed in roots, cotyledons, seedlings, leaves, stems, buds, flower and silique walls. Preferentially expressed in the shoot apical meristem and the root meristem. Also detected in expanding leaves and petals, developing flowers, and elongating pistils, stamens and siliques.

It localises to the cell membrane. Lipid transfer protein that, together with LTPG1, binds to lipids and functions as a component of the cuticular lipid export machinery that performs extensive export of intracellular lipids (e.g. C29 alkane) from epidermal cells to the surface to build the cuticular wax layer and silique walls. Contributes to pre-invasive defense against some non-host powdery mildew pathogens by preventing the penetration of the epidermal cell wall by the fungal agents (e.g. Blumeria graminis f. sp. hordei (Bgh)). Involved in seed and ovule maturation and development, probably by regulating the fatty acids homeostasis during suberin and sporopollenin biosynthesis or deposition. The polypeptide is Non-specific lipid transfer protein GPI-anchored 2 (Arabidopsis thaliana (Mouse-ear cress)).